Consider the following 284-residue polypeptide: 2-dehydro-3-deoxyphosphooctonate aldolase (284 aa).

It belongs to the KdsA family.

The protein localises to the cytoplasm. It catalyses the reaction D-arabinose 5-phosphate + phosphoenolpyruvate + H2O = 3-deoxy-alpha-D-manno-2-octulosonate-8-phosphate + phosphate. It functions in the pathway carbohydrate biosynthesis; 3-deoxy-D-manno-octulosonate biosynthesis; 3-deoxy-D-manno-octulosonate from D-ribulose 5-phosphate: step 2/3. It participates in bacterial outer membrane biogenesis; lipopolysaccharide biosynthesis. In Photobacterium profundum (strain SS9), this protein is 2-dehydro-3-deoxyphosphooctonate aldolase.